The sequence spans 37 residues: Antifungal protein S (37 aa).

It belongs to the thaumatin family.

In terms of biological role, has antifungal activity. Inhibits the growth of Trichoderma viridae and Candida albicans. The protein is Antifungal protein S of Hordeum vulgare (Barley).